The primary structure comprises 361 residues: Phosphoserine aminotransferase (361 aa).

An L-glutamate-binding site is contributed by R42. Pyridoxal 5'-phosphate contacts are provided by residues 76-77 (AR), W102, T153, D173, and Q196. K197 is subject to N6-(pyridoxal phosphate)lysine. 238–239 (NT) is a binding site for pyridoxal 5'-phosphate.

Belongs to the class-V pyridoxal-phosphate-dependent aminotransferase family. SerC subfamily. As to quaternary structure, homodimer. It depends on pyridoxal 5'-phosphate as a cofactor.

The protein localises to the cytoplasm. The enzyme catalyses O-phospho-L-serine + 2-oxoglutarate = 3-phosphooxypyruvate + L-glutamate. It catalyses the reaction 4-(phosphooxy)-L-threonine + 2-oxoglutarate = (R)-3-hydroxy-2-oxo-4-phosphooxybutanoate + L-glutamate. It functions in the pathway amino-acid biosynthesis; L-serine biosynthesis; L-serine from 3-phospho-D-glycerate: step 2/3. It participates in cofactor biosynthesis; pyridoxine 5'-phosphate biosynthesis; pyridoxine 5'-phosphate from D-erythrose 4-phosphate: step 3/5. Functionally, catalyzes the reversible conversion of 3-phosphohydroxypyruvate to phosphoserine and of 3-hydroxy-2-oxo-4-phosphonooxybutanoate to phosphohydroxythreonine. The protein is Phosphoserine aminotransferase of Pectobacterium carotovorum subsp. carotovorum (strain PC1).